We begin with the raw amino-acid sequence, 83 residues long: Protein L83L (83 aa).

Residues 1–26 (MDTSLKKNNGALEADNKNYQNYKDEP) are disordered.

Belongs to the asfivirus L83L family. In terms of assembly, interacts with host IL1B.

Its subcellular location is the host cytoplasm. Functionally, may subvert the host innate immune response by interacting with host IL1B and interfering with its function. The chain is Protein L83L from Ornithodoros (relapsing fever ticks).